The chain runs to 150 residues: Cytochrome c oxidase subunit 5A, mitochondrial (150 aa).

Residues 1 to 41 (MLGAALRRCAVAATTRAGPRGLLHSARTPGPAAAIQSVRCX) constitute a mitochondrion transit peptide. Positions 2–17 (LGAALRRCAVAATTRA) match the SIFI-degron motif. Lys87 and Lys113 each carry N6-acetyllysine. Thr141 bears the Phosphothreonine mark.

The protein belongs to the cytochrome c oxidase subunit 5A family. In terms of assembly, component of the cytochrome c oxidase (complex IV, CIV), a multisubunit enzyme composed of 14 subunits. The complex is composed of a catalytic core of 3 subunits MT-CO1, MT-CO2 and MT-CO3, encoded in the mitochondrial DNA, and 11 supernumerary subunits COX4I, COX5A, COX5B, COX6A, COX6B, COX6C, COX7A, COX7B, COX7C, COX8 and NDUFA4, which are encoded in the nuclear genome. The complex exists as a monomer or a dimer and forms supercomplexes (SCs) in the inner mitochondrial membrane with NADH-ubiquinone oxidoreductase (complex I, CI) and ubiquinol-cytochrome c oxidoreductase (cytochrome b-c1 complex, complex III, CIII), resulting in different assemblies (supercomplex SCI(1)III(2)IV(1) and megacomplex MCI(2)III(2)IV(2)). Interacts with AFG1L. Interacts with RAB5IF. In terms of processing, in response to mitochondrial stress, the precursor protein is ubiquitinated by the SIFI complex in the cytoplasm before mitochondrial import, leading to its degradation. Within the SIFI complex, UBR4 initiates ubiquitin chain that are further elongated or branched by KCMF1.

It localises to the mitochondrion inner membrane. It participates in energy metabolism; oxidative phosphorylation. Its function is as follows. Component of the cytochrome c oxidase, the last enzyme in the mitochondrial electron transport chain which drives oxidative phosphorylation. The respiratory chain contains 3 multisubunit complexes succinate dehydrogenase (complex II, CII), ubiquinol-cytochrome c oxidoreductase (cytochrome b-c1 complex, complex III, CIII) and cytochrome c oxidase (complex IV, CIV), that cooperate to transfer electrons derived from NADH and succinate to molecular oxygen, creating an electrochemical gradient over the inner membrane that drives transmembrane transport and the ATP synthase. Cytochrome c oxidase is the component of the respiratory chain that catalyzes the reduction of oxygen to water. Electrons originating from reduced cytochrome c in the intermembrane space (IMS) are transferred via the dinuclear copper A center (CU(A)) of subunit 2 and heme A of subunit 1 to the active site in subunit 1, a binuclear center (BNC) formed by heme A3 and copper B (CU(B)). The BNC reduces molecular oxygen to 2 water molecules using 4 electrons from cytochrome c in the IMS and 4 protons from the mitochondrial matrix. This is Cytochrome c oxidase subunit 5A, mitochondrial (COX5A) from Pan paniscus (Pygmy chimpanzee).